The chain runs to 331 residues: MTSRSVCEKMTMTTENPNQTVVSHFFLEGLRYTAKHSSLFFLLFLLIYSITVAGNLLILLTVGSDSHLSLPMYHFLGHLSFLDACLSTVTVPKVMAGLLTLDGKVISFEGCAVQLYCFHFLASTECFLYTVMAYDRYLAICQPLHYPVAMNRRMCAEMAGITWAIGATHAAIHTSLTFRLLYCGPCHIAYFFCDIPPVLKLACTDTTINELVMLASIGIVAAGCLILIVISYIFIVAAVLRIRTAQGRQRAFSPCTAQLTGVLLYYVPPVCIYLQPRSSEAGAGAPAVFYTIVTPMLNPFIYTLRNKEVKHALQRLLCSSFRESTAGSPPP.

Over 1–38 the chain is Extracellular; sequence MTSRSVCEKMTMTTENPNQTVVSHFFLEGLRYTAKHSS. N18 is a glycosylation site (N-linked (GlcNAc...) asparagine). The helical transmembrane segment at 39-59 threads the bilayer; it reads LFFLLFLLIYSITVAGNLLIL. At 60 to 67 the chain is on the cytoplasmic side; that stretch reads LTVGSDSH. The chain crosses the membrane as a helical span at residues 68-88; sequence LSLPMYHFLGHLSFLDACLST. Residues 89-113 lie on the Extracellular side of the membrane; it reads VTVPKVMAGLLTLDGKVISFEGCAV. C111 and C203 are joined by a disulfide. The chain crosses the membrane as a helical span at residues 114 to 134; that stretch reads QLYCFHFLASTECFLYTVMAY. Residues 135-153 are Cytoplasmic-facing; sequence DRYLAICQPLHYPVAMNRR. Residues 154–174 traverse the membrane as a helical segment; that stretch reads MCAEMAGITWAIGATHAAIHT. The Extracellular portion of the chain corresponds to 175–211; it reads SLTFRLLYCGPCHIAYFFCDIPPVLKLACTDTTINEL. A helical membrane pass occupies residues 212-231; that stretch reads VMLASIGIVAAGCLILIVIS. Residues 232–251 lie on the Cytoplasmic side of the membrane; it reads YIFIVAAVLRIRTAQGRQRA. Residues 252–272 traverse the membrane as a helical segment; sequence FSPCTAQLTGVLLYYVPPVCI. The Extracellular portion of the chain corresponds to 273-283; sequence YLQPRSSEAGA. The helical transmembrane segment at 284–304 threads the bilayer; it reads GAPAVFYTIVTPMLNPFIYTL. At 305-331 the chain is on the cytoplasmic side; it reads RNKEVKHALQRLLCSSFRESTAGSPPP.

The protein belongs to the G-protein coupled receptor 1 family.

The protein resides in the cell membrane. Its function is as follows. Odorant receptor. This is Olfactory receptor 10S1 (OR10S1) from Homo sapiens (Human).